A 341-amino-acid chain; its full sequence is Protein quaking-A (341 aa).

A KH domain is found at 87 to 153; the sequence is FVPVKEYPDY…WEHLNEDLHV (67 aa). An SH3-binding motif is present at residues 276–279; it reads PPTP. The short motif at 324-330 is the Nuclear localization signal element; the sequence is RVHPYQR.

It belongs to the quaking family. As to quaternary structure, homodimer; does not require RNA to homodimerize.

It is found in the cytoplasm. The protein localises to the nucleus. RNA reader protein, which recognizes and binds specific RNAs, thereby regulating RNA metabolic processes, such as pre-mRNA splicing, circular RNA (circRNA) formation, mRNA export, mRNA stability and/or translation. Involved in various cellular processes, such as mRNA storage into stress granules, apoptosis, interferon response, glial cell fate and development. Binds to the 5'-NACUAAY-N(1,20)-UAAY-3' RNA core sequence. Acts as a mRNA modification reader that specifically recognizes and binds mRNA transcripts modified by internal N(7)-methylguanine (m7G). Promotes the formation of circular RNAs (circRNAs): acts by binding to sites flanking circRNA-forming exons. CircRNAs are produced by back-splicing circularization of pre-mRNAs. Required to protect and promote stability of mRNAs which promotes oligodendrocyte differentiation. Acts as an important regulator of muscle development: required during early skeletal myofibril formation by regulating the accumulation of the muscle-specific tropomyosin-3 (tpm3) transcripts. This chain is Protein quaking-A, found in Danio rerio (Zebrafish).